The primary structure comprises 73 residues: uncharacterized protein (73 aa).

The region spanning Met-8–Glu-63 is the HTH deoR-type domain. A DNA-binding region (H-T-H motif) is located at residues Val-25 to Asp-44.

This is an uncharacterized protein from Bacillus subtilis (strain 168).